A 219-amino-acid polypeptide reads, in one-letter code: Thymidylate kinase (219 aa).

An ATP-binding site is contributed by 7–14; it reads GIDGCGKT.

Belongs to the thymidylate kinase family.

The catalysed reaction is dTMP + ATP = dTDP + ADP. Its function is as follows. Phosphorylation of dTMP to form dTDP in both de novo and salvage pathways of dTTP synthesis. The sequence is that of Thymidylate kinase from Anaplasma phagocytophilum (strain HZ).